Consider the following 274-residue polypeptide: Diaminopimelate epimerase (274 aa).

Positions 11, 44, and 64 each coordinate substrate. The active-site Proton donor is the Cys73. Substrate contacts are provided by residues Gly74 to Asn75, Asn157, Asn190, and Glu208 to Arg209. Residue Cys217 is the Proton acceptor of the active site. Position 218–219 (Gly218–Ser219) interacts with substrate.

It belongs to the diaminopimelate epimerase family. As to quaternary structure, homodimer.

The protein resides in the cytoplasm. The catalysed reaction is (2S,6S)-2,6-diaminopimelate = meso-2,6-diaminopimelate. The protein operates within amino-acid biosynthesis; L-lysine biosynthesis via DAP pathway; DL-2,6-diaminopimelate from LL-2,6-diaminopimelate: step 1/1. Its function is as follows. Catalyzes the stereoinversion of LL-2,6-diaminopimelate (L,L-DAP) to meso-diaminopimelate (meso-DAP), a precursor of L-lysine and an essential component of the bacterial peptidoglycan. This chain is Diaminopimelate epimerase, found in Haemophilus influenzae (strain PittGG).